The chain runs to 216 residues: Putative cat eye syndrome critical region protein 9 (216 aa).

The N-terminal stretch at 1–23 (MQSHLAPLACAAAAGRAGGSCQA) is a signal peptide. Asparagine 148 is a glycosylation site (N-linked (GlcNAc...) asparagine).

As to expression, ubiquitously expressed with higher expression in heart.

It is found in the secreted. The chain is Putative cat eye syndrome critical region protein 9 (CECR9) from Homo sapiens (Human).